The following is a 375-amino-acid chain: tRNA-specific 2-thiouridylase MnmA (375 aa).

ATP-binding positions include 12–19 and M38; that span reads GMSGGVDS. Residues 98–100 are interaction with target base in tRNA; it reads NPD. Residue C103 is the Nucleophile of the active site. A disulfide bridge links C103 with C200. Position 127 (G127) interacts with ATP. The interaction with tRNA stretch occupies residues 150–152; it reads KDQ. C200 serves as the catalytic Cysteine persulfide intermediate. The interaction with tRNA stretch occupies residues 312-313; the sequence is RY.

Belongs to the MnmA/TRMU family.

It localises to the cytoplasm. The catalysed reaction is S-sulfanyl-L-cysteinyl-[protein] + uridine(34) in tRNA + AH2 + ATP = 2-thiouridine(34) in tRNA + L-cysteinyl-[protein] + A + AMP + diphosphate + H(+). Its function is as follows. Catalyzes the 2-thiolation of uridine at the wobble position (U34) of tRNA, leading to the formation of s(2)U34. In Lactobacillus johnsonii (strain CNCM I-12250 / La1 / NCC 533), this protein is tRNA-specific 2-thiouridylase MnmA.